We begin with the raw amino-acid sequence, 81 residues long: Conotoxin ViKr92 (81 aa).

A signal peptide spans 1–22 (MKLTWMMIVAVLFLTAWTFVTA). Positions 23–51 (DDTRYKLENPFLKARNELQKLEASQLNER) are excised as a propeptide. Disulfide bonds link cysteine 53–cysteine 70, cysteine 60–cysteine 74, and cysteine 69–cysteine 78.

This sequence belongs to the conotoxin O1 superfamily. Expressed by the venom duct.

The protein localises to the secreted. The protein is Conotoxin ViKr92 of Conus virgo (Virgin cone).